Reading from the N-terminus, the 160-residue chain is Putative pre-16S rRNA nuclease (160 aa).

Belongs to the YqgF nuclease family.

Its subcellular location is the cytoplasm. Its function is as follows. Could be a nuclease involved in processing of the 5'-end of pre-16S rRNA. This chain is Putative pre-16S rRNA nuclease, found in Cereibacter sphaeroides (strain ATCC 17029 / ATH 2.4.9) (Rhodobacter sphaeroides).